Consider the following 705-residue polypeptide: Effector protein hopD1 (705 aa).

2 stretches are compositionally biased toward polar residues: residues Met1 to Ile11 and Gln28 to Gln41. 2 disordered regions span residues Met1 to Gln41 and Ser173 to Ser207. A compositionally biased stretch (low complexity) spans Ser173–Pro184.

Its subcellular location is the secreted. Functionally, effector protein involved in non-host recognition. This Pseudomonas syringae pv. tomato (strain ATCC BAA-871 / DC3000) protein is Effector protein hopD1 (hopD1).